We begin with the raw amino-acid sequence, 671 residues long: K(+)-insensitive pyrophosphate-energized proton pump (671 aa).

The next 5 helical transmembrane spans lie at 3 to 23, 57 to 77, 79 to 99, 128 to 148, and 156 to 176; these read SLIF…AFFA, TIAV…DDGL, IAIG…IGMS, AVTG…FYIL, and VGFG…GGIF. Residue Lys178 coordinates substrate. Residues Asp181, Asp185, Asn208, and Asp211 each contribute to the Mg(2+) site. The next 6 membrane-spanning stretches (helical) occupy residues 223 to 243, 249 to 269, 285 to 305, 310 to 330, 366 to 386, and 391 to 411; these read LFET…LIIG, ILYP…SVFF, GVGG…NSLM, LFYA…ITEY, LVPT…VGGA, and IGLY…GMIV. Residue Asp421 coordinates Mg(2+). The next 4 helical transmembrane spans lie at 452–472, 490–510, 558–578, and 580–600; these read AVTK…LFAD, VVLA…AVTM, MAMP…ILGP, and ALAG…LMMD. Asp607, Asp633, and Asp637 together coordinate Ca(2+). Position 640 (Lys640) interacts with substrate. A helical membrane pass occupies residues 646 to 666; the sequence is ALNALIKVVNMVAILFSSLII.

Belongs to the H(+)-translocating pyrophosphatase (TC 3.A.10) family. K(+)-insensitive subfamily. As to quaternary structure, homodimer. Requires Mg(2+) as cofactor.

The protein resides in the cell membrane. The enzyme catalyses diphosphate + H2O + H(+)(in) = 2 phosphate + 2 H(+)(out). Its function is as follows. Proton pump that utilizes the energy of pyrophosphate hydrolysis as the driving force for proton movement across the membrane. Generates a proton motive force. This Methanosarcina acetivorans (strain ATCC 35395 / DSM 2834 / JCM 12185 / C2A) protein is K(+)-insensitive pyrophosphate-energized proton pump.